Here is a 414-residue protein sequence, read N- to C-terminus: MSLKDKFFSHVSQEDWNDWKWQVRNRIETVEELKKYIPLTPEEEEGVKRCLDTLRMAITPYYLSLIDVENPNDPVRKQAVPLSLELHRAASDQEDPLHEDGDSPVPGLTHRYPDRVLLLMTDQCSMYCRHCTRRRFAGQTDSAVDTKQIDAAIEYIKNTPQVRDVLLSGGDALLISDEKLEYTIKRLREIPHVEVIRIGSRVPVVMPQRITPELVSMLKKYHPVWLNTHFNHPNEITEESKRACELLADAGIPLGNQSVLLAGVNDCMHVMKKLVNDLVKIRVRPYYIYQCDLSVGIEHFRTPVAKGIEIIEGLRGHTSGYCVPTFVVDAPGGGGKTPVMPNYVISQNHNKVILRNFEGVITTYDEPDHYTFHCDCDVCTGKTNVHKVGVAGLLNGETATLEPEGLERKQRGHH.

Over residues 89 to 101 (AASDQEDPLHEDG) the composition is skewed to basic and acidic residues. Residues 89-108 (AASDQEDPLHEDGDSPVPGL) are disordered. Residues 110-321 (HRYPDRVLLL…EGLRGHTSGY (212 aa)) form the Radical SAM core domain. Residues C124, C128, and C131 each coordinate [4Fe-4S] cluster. C267 is a Zn(2+) binding site. K336 is subject to N6-(pyridoxal phosphate)lysine. Zn(2+)-binding residues include C374, C376, and C379.

The protein belongs to the radical SAM superfamily. KamA family. Homotetramer. [4Fe-4S] cluster is required as a cofactor. Pyridoxal 5'-phosphate serves as cofactor. It depends on Zn(2+) as a cofactor.

It carries out the reaction L-lysine = (3S)-3,6-diaminohexanoate. It participates in amino-acid degradation; L-lysine degradation via acetate pathway. Functionally, catalyzes the interconversion of L-alpha-lysine and L-beta-lysine. This Acetoanaerobium sticklandii (strain ATCC 12662 / DSM 519 / JCM 1433 / CCUG 9281 / NCIMB 10654 / HF) (Clostridium sticklandii) protein is L-lysine 2,3-aminomutase (kamA).